The following is an 867-amino-acid chain: KH domain-containing protein akap-1 (867 aa).

Residues 108 to 128 (HALLIALGGFSIAALFVWYIN) form a helical membrane-spanning segment. Disordered stretches follow at residues 145–458 (SNGL…QKRV) and 481–523 (HENA…GLTT). A compositionally biased stretch (polar residues) spans 152–162 (ATASDVQTENG). Basic and acidic residues-rich tracts occupy residues 186-211 (QQKDEDEKTQKKDAVQNEKPSIDKKQ), 218-239 (TEKKEEKTVEIHTETEETDHVA), 247-275 (SEHKEHDKKTKQKNDEPVSIDKKSEEIEV), and 298-307 (QFVKKEEPKL). A compositionally biased stretch (polar residues) spans 336–345 (TKMNDATSPL). Residues 363–383 (EMEKSFNEEEFRLNESSDIDR) show a composition bias toward basic and acidic residues. Positions 397-408 (NKNRSSQKRKGG) are enriched in basic residues. Composition is skewed to basic and acidic residues over residues 441-458 (LTKEKSVEETPEKSQKRV) and 481-490 (HENASYEKSD). Over residues 494–507 (LDSQNSEASSQDSG) the composition is skewed to polar residues. Residues 528–595 (LPMYEFEIPN…DEINHCLQML (68 aa)) form the KH domain. A Tudor domain is found at 689 to 747 (PCQNGLLCAAPVGNAWFRAVTVQYFDETDEVFVKFVDYGGYSKMARQDLRQIRTDLMSL).

The protein localises to the membrane. The chain is KH domain-containing protein akap-1 from Caenorhabditis elegans.